Here is a 354-residue protein sequence, read N- to C-terminus: MGCTLSAEDKAAVERSKMIDRNLREDGEKAAKEVKLLLLGAGESGKSTIVKQMKIIHEDGYSEDECKQYKVVVYSNTIQSIIAIIRAMGRLKIDFGEAARADDARQLFVLAGSAEEGVMTSELAGVIKRLWRDGGVQACFSRSREYQLNDSASYYLNDLDRISQTNYIPTQQDVLRTRVKTTGIVETHFTFKELYFKMFDVGGQRSERKKWIHCFEGVTAIIFCVALSDYDLVLAEDEEMNRMHESMKLFDSICNNKWFTDTSIILFLNKKDLFEEKIKRSPLTICYPEYTGSNTYEEAAAYIQCQFEDLNRRKDTKEVYTHFTCATDTKNVQFVFDAVTDVIIKNNLKECGLY.

Gly-2 is lipidated: N-myristoyl glycine. Residue Cys-3 is the site of S-palmitoyl cysteine attachment. A G-alpha domain is found at 32–354 (KEVKLLLLGA…KNNLKECGLY (323 aa)). The G1 motif stretch occupies residues 35–48 (KLLLLGAGESGKST). GTP contacts are provided by Gly-42, Glu-43, Ser-44, Gly-45, Lys-46, Ser-47, Thr-48, Asp-150, Ser-151, Leu-175, Arg-176, Thr-177, Arg-178, Val-179, Lys-180, Thr-181, Val-201, Gly-203, Asn-269, Lys-270, Asp-272, Leu-273, Cys-325, Ala-326, and Thr-327. Ser-47 contacts Mg(2+). The tract at residues 173-181 (DVLRTRVKT) is G2 motif. Thr-181 provides a ligand contact to Mg(2+). Positions 196–205 (FKMFDVGGQR) are G3 motif. Residues 265–272 (ILFLNKKD) are G4 motif. Residues 324–329 (TCATDT) form a G5 motif region.

This sequence belongs to the G-alpha family. G(i/o/t/z) subfamily. In terms of assembly, heterotrimeric G proteins are composed of 3 units; alpha, beta and gamma. The alpha subunit contains the guanine nucleotide binding site. GTP binding causes dissociation of the heterotrimer, liberating the individual subunits so that they can interact with downstream effector proteins. Forms a complex with CCDC88A/GIV and EGFR which leads to enhanced EGFR signaling and triggering of cell migration; ligand stimulation is required for recruitment of GNAI3 to the complex. Interacts (inactive GDP-bound form) with CCDC88A/GIV (via GBA motif); the interaction leads to activation of GNAI3. Interacts (inactive GDP-bound form) with CCDC88C/DAPLE (via GBA motif); the interaction leads to activation of GNAI3. Interacts (inactive GDP-bound form) with NUCB1 (via GBA motif) and NUCB2 (via GBA motif); the interaction leads to activation of GNAI3. Interacts (inactive GDP-bound form) with PLCD4 (via GBA motif); the interaction leads to activation of GNAI3. Interacts with INSR; the interaction is probably mediated by CCDC88A/GIV. Interacts with GPSM1. Interacts (GDP-bound form) with GPSM2 (via GoLoco domains). Does not interact with RGS2. Interacts with RGS8 and RGS10; this strongly enhances the intrinsic GTPase activity. Interacts with RGS12. Interacts with RGS16; this strongly enhances the intrinsic GTPase activity. Interacts (via active GTP- or inactive GDP-bound form) with RGS14. Interacts (via active GTP-bound form) with TRPC5 (via ANK repeats) in a homotetrameric ion channel; the interaction is direct and activates the channel activity. In terms of tissue distribution, ubiquitous.

The protein localises to the cytoplasm. The protein resides in the cell membrane. Its subcellular location is the cytoskeleton. It localises to the microtubule organizing center. It is found in the centrosome. Heterotrimeric guanine nucleotide-binding proteins (G proteins) function as transducers downstream of G protein-coupled receptors (GPCRs) in numerous signaling cascades. The alpha chain contains the guanine nucleotide binding site and alternates between an active, GTP-bound state and an inactive, GDP-bound state. Signaling by an activated GPCR promotes GDP release and GTP binding. The alpha subunit has a low GTPase activity that converts bound GTP to GDP, thereby terminating the signal. Both GDP release and GTP hydrolysis are modulated by numerous regulatory proteins. Signaling is mediated via effector proteins, such as adenylate cyclase. Inhibits adenylate cyclase activity, leading to decreased intracellular cAMP levels. Stimulates the activity of receptor-regulated K(+) channels. The active GTP-bound form prevents the association of RGS14 with centrosomes and is required for the translocation of RGS14 from the cytoplasm to the plasma membrane. May play a role in cell division. The active GTP-bound form activates the calcium permeant TRPC5 ion channels. This chain is Guanine nucleotide-binding protein G(i) subunit alpha-3 (Gnai3), found in Rattus norvegicus (Rat).